The primary structure comprises 421 residues: WD repeat and SOCS box-containing protein 1 (421 aa).

6 WD repeats span residues Lys32–Leu71, Ser124–Asn165, Asp168–Lys208, Gly212–Lys251, Gly254–Glu293, and Ala309–Val346. The SOCS box domain occupies Asp372–Ile421.

Interacts with DIO2. Component of the probable ECS(WSB1) E3 ubiquitin ligase complex which contains CUL5, RNF7/RBX2, Elongin BC complex and WSB1. Component of a probable ECS-like E3 ubiquitin-protein ligase complex which contains CUL5, RBX1, Elongin BC complex and WSB1. Interacts with CUL5, RNF7, ELOB and ELOC. Binds to HIPK2 through WD40 repeats.

It functions in the pathway protein modification; protein ubiquitination. In terms of biological role, probable substrate-recognition component of a SCF-like ECS (Elongin-Cullin-SOCS-box protein) E3 ubiquitin ligase complex which mediates the ubiquitination and subsequent proteasomal degradation of target proteins. Recognizes type II iodothyronine deiodinase/DIO2. Confers constitutive instability to HIPK2 through proteasomal degradation. This is WD repeat and SOCS box-containing protein 1 (WSB1) from Homo sapiens (Human).